Here is a 478-residue protein sequence, read N- to C-terminus: MASKRLGFVVVLALVCQHINAFPTPAGPDDKYNRELTEEKPLEQQIAEADSIRKTESKPTPPAEEETNSEDDDITFLKALAEKSKESNNETPISDSANERLGADDTDSTKNRRLADDYDSTKNGMDYKYQDDPESFRQLDGTPLTAQDIVQKIANKIYEEDDRGVFDRIVSKLLKLGLITDSQAETLEYEVAEALQDLITKNAKDNMIGDRSVDYPVSAAKDTQDEEDRPSPRFDEEDEVENEGGDDANGDEPQEEESRDDTVRSDDSWDAVSDGNDRNELNPEDGLQDLQFFPNFYRLLKSLDSEQDKEERETLITIMKTLIDFVKMMVKYGTITPEEGVTYLENLDAMIALQTKNKLGKSLVPLSITPPTGKAADDDDNTKTEAAKMQKEYESLKDSTKDVQTAAEISHPGKSESYLEAIRKNIEWLKKHNKEGNKEDYDLSKLRDFMDQQVDSYIDKGILEKDEGDVIKRIYGSL.

An N-terminal signal peptide occupies residues 1–21; the sequence is MASKRLGFVVVLALVCQHINA. Disordered stretches follow at residues 22–126 and 208–287; these read FPTP…NGMD and IGDR…EDGL. The segment covering 28 to 42 has biased composition (basic and acidic residues); the sequence is PDDKYNRELTEEKPL. The span at 63–74 shows a compositional bias: acidic residues; that stretch reads AEEETNSEDDDI. Basic and acidic residues predominate over residues 97–120; it reads ANERLGADDTDSTKNRRLADDYDS. Positions 235 to 259 are enriched in acidic residues; that stretch reads DEEDEVENEGGDDANGDEPQEEESR.

Its subcellular location is the cytoplasmic vesicle. The protein localises to the secretory vesicle lumen. The protein resides in the secretory vesicle membrane. It localises to the secreted. This Danio rerio (Zebrafish) protein is Secretogranin-3 (scg3).